The primary structure comprises 200 residues: Adenylate kinase (200 aa).

10 to 15 (GAGKGT) contacts ATP. The tract at residues 30–59 (STGDMLRAAVAAETPVGLEAKAIMESGGLV) is NMP. AMP-binding positions include Thr31, Arg36, 57-59 (GLV), 85-88 (GFPR), and Gln92. The LID stretch occupies residues 126–142 (KRAEETAARGQPVRKDD). Arg127 serves as a coordination point for ATP. Arg139 and Arg150 together coordinate AMP. Residue Lys178 participates in ATP binding.

Belongs to the adenylate kinase family. In terms of assembly, monomer.

The protein localises to the cytoplasm. The catalysed reaction is AMP + ATP = 2 ADP. Its pathway is purine metabolism; AMP biosynthesis via salvage pathway; AMP from ADP: step 1/1. Its function is as follows. Catalyzes the reversible transfer of the terminal phosphate group between ATP and AMP. Plays an important role in cellular energy homeostasis and in adenine nucleotide metabolism. The sequence is that of Adenylate kinase from Methylorubrum extorquens (strain CM4 / NCIMB 13688) (Methylobacterium extorquens).